The chain runs to 86 residues: Kappa-theraphotoxin-Cg1a 5 (86 aa).

An N-terminal signal peptide occupies residues 1 to 21 (MKVSVLITLAVLGVMFVWTSA). Positions 22–50 (AELEERGSDQRDSPAWLKSMERIFQSEER) are excised as a propeptide. 3 cysteine pairs are disulfide-bonded: C52–C66, C59–C71, and C65–C78. F84 carries the post-translational modification Phenylalanine amide.

Belongs to the neurotoxin 10 (Hwtx-1) family. 28 (Jztx-11) subfamily. As to expression, expressed by the venom gland.

It is found in the secreted. Its function is as follows. This toxin acts as a voltage-dependent gating-modifier. It inhibits the sodium conductance (IC(50)=124 nM) and slows the fast inactivation (EC(50)=1180 nM) of Nav1.5/SCN5A. It significantly shifts the activation to more depolarized voltages and decreases the deactivation of Nav1.5 currents upon extreme depolarization, but only slightly affects voltage-dependence of steady-state inactivation. In addition, this toxin causes an approximately five-fold decrease in the rate of recovery from inactivation and an approximately 1.9-fold reduction in the closed-state inactivation rate. This toxin integrates the functions of site 3 toxins (alpha-scorpion toxins) with site 4 toxins (beta-scorpion and spider toxins) by targeting multiple sites on Nav1.5. Also shows inhibition of voltage-gated potassium channels (5 uM completely inhibits Kv2.1/KCNB1, whereas 5 uM moderately inhibits Kv4.2/KCND2 Kv4.1/KCND1 channels). In Chilobrachys guangxiensis (Chinese earth tiger tarantula), this protein is Kappa-theraphotoxin-Cg1a 5.